Here is a 300-residue protein sequence, read N- to C-terminus: Ribosomal protein bS6--L-glutamate ligase (300 aa).

Residues methionine 104 to glutamate 287 form the ATP-grasp domain. ATP contacts are provided by residues lysine 141, glutamate 178–tyrosine 179, aspartate 187, and arginine 211–asparagine 213. Residues aspartate 248, glutamate 260, and asparagine 262 each contribute to the Mg(2+) site. 3 residues coordinate Mn(2+): aspartate 248, glutamate 260, and asparagine 262.

The protein belongs to the RimK family. The cofactor is Mg(2+). Mn(2+) is required as a cofactor.

Functionally, an L-glutamate ligase that catalyzes the ATP-dependent post-translational addition of glutamate residues to the C-terminus of ribosomal protein bS6 (RpsF). Is also able to catalyze the synthesis of poly-alpha-glutamate in vitro, via ATP hydrolysis from unprotected glutamate as substrate. The number of glutamate residues added to either RpsF or to poly-alpha-glutamate changes with pH. The sequence is that of Ribosomal protein bS6--L-glutamate ligase from Escherichia coli O139:H28 (strain E24377A / ETEC).